The chain runs to 730 residues: Catalase-peroxidase (730 aa).

Residues methionine 1–aspartate 25 are disordered. Positions tryptophan 95–tyrosine 218 form a cross-link, tryptophyl-tyrosyl-methioninium (Trp-Tyr) (with M-244). The active-site Proton acceptor is the histidine 96. Positions tyrosine 218–methionine 244 form a cross-link, tryptophyl-tyrosyl-methioninium (Tyr-Met) (with W-95). Histidine 259 lines the heme b pocket.

This sequence belongs to the peroxidase family. Peroxidase/catalase subfamily. In terms of assembly, homodimer or homotetramer. Requires heme b as cofactor. Post-translationally, formation of the three residue Trp-Tyr-Met cross-link is important for the catalase, but not the peroxidase activity of the enzyme.

The enzyme catalyses H2O2 + AH2 = A + 2 H2O. It catalyses the reaction 2 H2O2 = O2 + 2 H2O. Its function is as follows. Bifunctional enzyme with both catalase and broad-spectrum peroxidase activity. The polypeptide is Catalase-peroxidase (Desulfitobacterium hafniense (strain Y51)).